A 315-amino-acid chain; its full sequence is Initiation factor TFIIB homolog (315 aa).

The protein belongs to the asfivirus C315R family.

Its function is as follows. Putative initation factor. The polypeptide is Initiation factor TFIIB homolog (African swine fever virus (strain Badajoz 1971 Vero-adapted) (Ba71V)).